Here is an 82-residue protein sequence, read N- to C-terminus: Small ribosomal subunit protein bS18 (82 aa).

Residues 1-25 (MADTSSSQARRPFHRRRKTCPFSGA) form a disordered region.

The protein belongs to the bacterial ribosomal protein bS18 family. As to quaternary structure, part of the 30S ribosomal subunit. Forms a tight heterodimer with protein bS6.

Functionally, binds as a heterodimer with protein bS6 to the central domain of the 16S rRNA, where it helps stabilize the platform of the 30S subunit. This is Small ribosomal subunit protein bS18 from Agrobacterium fabrum (strain C58 / ATCC 33970) (Agrobacterium tumefaciens (strain C58)).